Here is a 134-residue protein sequence, read N- to C-terminus: ATP synthase epsilon chain, chloroplastic (134 aa).

The protein belongs to the ATPase epsilon chain family. F-type ATPases have 2 components, CF(1) - the catalytic core - and CF(0) - the membrane proton channel. CF(1) has five subunits: alpha(3), beta(3), gamma(1), delta(1), epsilon(1). CF(0) has three main subunits: a, b and c.

It is found in the plastid. It localises to the chloroplast thylakoid membrane. Produces ATP from ADP in the presence of a proton gradient across the membrane. The polypeptide is ATP synthase epsilon chain, chloroplastic (Spinacia oleracea (Spinach)).